Consider the following 483-residue polypeptide: Dual specificity protein kinase CLK1 (483 aa).

Positions 1–49 (MRHSKRTYCPDWDERDWDYGTWRSSSSHKRKKRSHSSAREQKRCRYDHS) are disordered. Residues 26–36 (SSHKRKKRSHS) show a composition bias toward basic residues. The Nuclear localization signal signature appears at 29-33 (KRKKR). Over residues 37–49 (SAREQKRCRYDHS) the composition is skewed to basic and acidic residues. S61 is subject to Phosphoserine. Low complexity predominate over residues 84-111 (EPGHPYGEPGSRYQMHSSKSSGRSGRSS). The interval 84–146 (EPGHPYGEPG…SRSVEDDEEG (63 aa)) is disordered. A compositionally biased stretch (basic residues) spans 112–137 (YKSKHRSRHHTSQHHSHGKSHRRKRS). A Phosphoserine modification is found at S139. Residues 160 to 476 (YEIVDTLGEG…LKEALKHPFF (317 aa)) form the Protein kinase domain. ATP-binding positions include 166-174 (LGEGAFGKV) and K190. Residue D287 is the Proton acceptor of the active site.

Belongs to the protein kinase superfamily. CMGC Ser/Thr protein kinase family. Lammer subfamily. Interacts with PPIG and UBL5. Post-translationally, autophosphorylates on all three types of residues.

The protein resides in the nucleus. It catalyses the reaction L-seryl-[protein] + ATP = O-phospho-L-seryl-[protein] + ADP + H(+). The enzyme catalyses L-threonyl-[protein] + ATP = O-phospho-L-threonyl-[protein] + ADP + H(+). It carries out the reaction L-tyrosyl-[protein] + ATP = O-phospho-L-tyrosyl-[protein] + ADP + H(+). With respect to regulation, regulates splicing of its own pre-mRNA according to its kinase activity; increased expression of the catalytically active form influences splicing to generate the catalytically inactive splicing variant lacking the kinase domain. Leucettine L41 inhibits its kinase activity and affects the regulation of alternative splicing mediated by phosphorylation of SR proteins. Dual specificity kinase acting on both serine/threonine and tyrosine-containing substrates. Phosphorylates serine- and arginine-rich (SR) proteins of the spliceosomal complex and may be a constituent of a network of regulatory mechanisms that enable SR proteins to control RNA splicing. Phosphorylates: SRSF1, SRSF3 and PTPN1. Regulates the alternative splicing of tissue factor (F3) pre-mRNA in endothelial cells. The chain is Dual specificity protein kinase CLK1 from Mus musculus (Mouse).